Consider the following 156-residue polypeptide: 6,7-dimethyl-8-ribityllumazine synthase (156 aa).

5-amino-6-(D-ribitylamino)uracil is bound by residues Phe-22, 57–59, and 81–83; these read AYE and TVI. 86-87 contributes to the (2S)-2-hydroxy-3-oxobutyl phosphate binding site; it reads GT. His-89 serves as the catalytic Proton donor. Phe-114 contributes to the 5-amino-6-(D-ribitylamino)uracil binding site. Arg-128 is a (2S)-2-hydroxy-3-oxobutyl phosphate binding site.

This sequence belongs to the DMRL synthase family. In terms of assembly, forms an icosahedral capsid composed of 60 subunits, arranged as a dodecamer of pentamers.

It catalyses the reaction (2S)-2-hydroxy-3-oxobutyl phosphate + 5-amino-6-(D-ribitylamino)uracil = 6,7-dimethyl-8-(1-D-ribityl)lumazine + phosphate + 2 H2O + H(+). The protein operates within cofactor biosynthesis; riboflavin biosynthesis; riboflavin from 2-hydroxy-3-oxobutyl phosphate and 5-amino-6-(D-ribitylamino)uracil: step 1/2. Its function is as follows. Catalyzes the formation of 6,7-dimethyl-8-ribityllumazine by condensation of 5-amino-6-(D-ribitylamino)uracil with 3,4-dihydroxy-2-butanone 4-phosphate. This is the penultimate step in the biosynthesis of riboflavin. In Salmonella agona (strain SL483), this protein is 6,7-dimethyl-8-ribityllumazine synthase.